We begin with the raw amino-acid sequence, 177 residues long: Putative membrane protein 165 (177 aa).

The Intravirion segment spans residues 1 to 7 (MYLVLLI). A helical membrane pass occupies residues 8-24 (AVILFIIVILMIFLISG). At 25–166 (LFYPEQEPAL…DPHPALKSKN (142 aa)) the chain is on the virion surface side.

This sequence belongs to the asfivirus envelope protein p22 family.

The protein resides in the virion membrane. The protein localises to the host cell membrane. The protein is Putative membrane protein 165 of African swine fever virus (isolate Pig/Kenya/KEN-50/1950) (ASFV).